Consider the following 383-residue polypeptide: MRAYCVTSESVTEGHPDKVCDQISDGILDACLAQDPAARVAVETLVSGNTVFIAGEITTTARLDAVRTAREVIEDIGYADPALGFDSGSCFILTNLRTQSPDIDLGVSRGAELGAGDQGVLYGYACDETASLMPAPIHMAHGLSLRLAAARHGGVLPWLRPDGKTQVTVRYDGEGRPEALTSVIVSTQHDEGVDRETLVRGIIEAVIYPEVGGWLKPETRVLINPTGRFVIGGPAGDTGVTGRKLMVDTYGGCARHGGGAFSGKDSTKVDRTAAYMARYAAKNVVAAGLARRCEVALAYAIGERLPEMVSVETFGTETIDVDRLTAAVRETFPFSVSGMIAALDLRRPIFRKTAAYGHFGRENKGFQWEKTDRVDALRAVCGL.

His15 contacts ATP. Position 17 (Asp17) interacts with Mg(2+). Glu43 is a binding site for K(+). Positions 56 and 99 each coordinate L-methionine. Positions 99–109 (QSPDIDLGVSR) are flexible loop. ATP contacts are provided by residues 162–164 (DGK), 228–229 (RF), Asp237, 243–244 (RK), Ala260, and Lys264. Asp237 is an L-methionine binding site. Lys268 lines the L-methionine pocket.

Belongs to the AdoMet synthase family. In terms of assembly, homotetramer; dimer of dimers. Mg(2+) serves as cofactor. K(+) is required as a cofactor.

It is found in the cytoplasm. It carries out the reaction L-methionine + ATP + H2O = S-adenosyl-L-methionine + phosphate + diphosphate. It participates in amino-acid biosynthesis; S-adenosyl-L-methionine biosynthesis; S-adenosyl-L-methionine from L-methionine: step 1/1. Functionally, catalyzes the formation of S-adenosylmethionine (AdoMet) from methionine and ATP. The overall synthetic reaction is composed of two sequential steps, AdoMet formation and the subsequent tripolyphosphate hydrolysis which occurs prior to release of AdoMet from the enzyme. This Rhodospirillum rubrum (strain ATCC 11170 / ATH 1.1.1 / DSM 467 / LMG 4362 / NCIMB 8255 / S1) protein is S-adenosylmethionine synthase 1.